Here is a 356-residue protein sequence, read N- to C-terminus: Glucan endo-1,3-beta-glucosidase, acidic isoform GL153 (356 aa).

The first 29 residues, 1–29, serve as a signal peptide directing secretion; it reads MALCIKNGFLAAALVLVGLLMCSIQMIGA. Position 30 is a pyrrolidone carboxylic acid (glutamine 30). Asparagine 95 carries N-linked (GlcNAc...) asparagine glycosylation. Glutamate 124 acts as the Proton donor in catalysis. The active-site Nucleophile is the glutamate 264.

Belongs to the glycosyl hydrolase 17 family. In terms of tissue distribution, is expressed primarily in epidermal cell of healthy plant, and following induction by ethylene, accumulates in mesophyll cells.

Its subcellular location is the secreted. The protein resides in the extracellular space. The catalysed reaction is Hydrolysis of (1-&gt;3)-beta-D-glucosidic linkages in (1-&gt;3)-beta-D-glucans.. Its function is as follows. Is thought to be an important plant defense-related product against fungal pathogens. This Nicotiana tabacum (Common tobacco) protein is Glucan endo-1,3-beta-glucosidase, acidic isoform GL153 (GGL4).